The chain runs to 91 residues: Small ribosomal subunit protein bS6 (91 aa).

It belongs to the bacterial ribosomal protein bS6 family.

Functionally, binds together with bS18 to 16S ribosomal RNA. The chain is Small ribosomal subunit protein bS6 from Leptospira biflexa serovar Patoc (strain Patoc 1 / Ames).